Reading from the N-terminus, the 150-residue chain is 1,4-dihydroxy-2-naphthoyl-CoA hydrolase (150 aa).

Asp-19 is a catalytic residue.

The protein belongs to the 4-hydroxybenzoyl-CoA thioesterase family. DHNA-CoA hydrolase subfamily.

It carries out the reaction 1,4-dihydroxy-2-naphthoyl-CoA + H2O = 1,4-dihydroxy-2-naphthoate + CoA + H(+). The protein operates within cofactor biosynthesis; phylloquinone biosynthesis. Its pathway is quinol/quinone metabolism; 1,4-dihydroxy-2-naphthoate biosynthesis; 1,4-dihydroxy-2-naphthoate from chorismate: step 7/7. In terms of biological role, catalyzes the hydrolysis of 1,4-dihydroxy-2-naphthoyl-CoA (DHNA-CoA) to 1,4-dihydroxy-2-naphthoate (DHNA), a reaction involved in phylloquinone (vitamin K1) biosynthesis. The polypeptide is 1,4-dihydroxy-2-naphthoyl-CoA hydrolase (Prochlorococcus marinus (strain MIT 9215)).